The primary structure comprises 145 residues: Transcriptional regulator SlyA (145 aa).

The HTH marR-type domain occupies 2-135 (ELPLGSDLAR…LALLVSRLEK (134 aa)). The H-T-H motif DNA-binding region spans 49 to 72 (QIQLAKAIGIEQPSLVRTLDQLEE).

The protein belongs to the SlyA family. In terms of assembly, homodimer.

Transcription regulator that can specifically activate or repress expression of target genes. Regulates genes involved in production of antibiotic and exoenzyme virulence determinants in the phytopathogen. Required for the expression of the virulence protein evf during Drosophila melanogaster infection. This Pectobacterium carotovorum subsp. carotovorum (Erwinia carotovora subsp. carotovora) protein is Transcriptional regulator SlyA.